Here is a 142-residue protein sequence, read N- to C-terminus: uncharacterized protein (142 aa).

A disordered region spans residues 1 to 22 (MSGSVNQNTDQHSQDSSSTPNN). The next 2 helical transmembrane spans lie at 63-83 (LFVM…VLLV) and 109-129 (IIDG…FVDL).

The protein localises to the membrane. This is an uncharacterized protein from Acanthamoeba polyphaga mimivirus (APMV).